The primary structure comprises 500 residues: Glutelin type-B 5 (500 aa).

The first 24 residues, 1-24, serve as a signal peptide directing secretion; the sequence is MATIAFSRLSIYFCVLLLCHGSMA. Cystine bridges form between cysteine 45–cysteine 78 and cysteine 121–cysteine 310. 2 consecutive Cupin type-1 domains span residues 50 to 245 and 316 to 465; these read LQAF…LVAK and LNIE…EQAR.

Belongs to the 11S seed storage protein (globulins) family. As to quaternary structure, hexamer; each subunit is composed of an acidic and a basic chain derived from a single precursor and linked by a disulfide bond.

In terms of biological role, seed storage protein. This is Glutelin type-B 5 (GLUB5) from Oryza sativa subsp. japonica (Rice).